The primary structure comprises 668 residues: tRNA 5-methylaminomethyl-2-thiouridine biosynthesis bifunctional protein MnmC (668 aa).

Residues 1 to 245 are tRNA (mnm(5)s(2)U34)-methyltransferase; it reads MKHYSIQPAN…KREMLCGVME (245 aa). An FAD-dependent cmnm(5)s(2)U34 oxidoreductase region spans residues 270–668; that stretch reads IGGGIASALL…LLKGKAVKAG (399 aa).

The protein in the N-terminal section; belongs to the methyltransferase superfamily. tRNA (mnm(5)s(2)U34)-methyltransferase family. This sequence in the C-terminal section; belongs to the DAO family. Requires FAD as cofactor.

The protein resides in the cytoplasm. The enzyme catalyses 5-aminomethyl-2-thiouridine(34) in tRNA + S-adenosyl-L-methionine = 5-methylaminomethyl-2-thiouridine(34) in tRNA + S-adenosyl-L-homocysteine + H(+). In terms of biological role, catalyzes the last two steps in the biosynthesis of 5-methylaminomethyl-2-thiouridine (mnm(5)s(2)U) at the wobble position (U34) in tRNA. Catalyzes the FAD-dependent demodification of cmnm(5)s(2)U34 to nm(5)s(2)U34, followed by the transfer of a methyl group from S-adenosyl-L-methionine to nm(5)s(2)U34, to form mnm(5)s(2)U34. The sequence is that of tRNA 5-methylaminomethyl-2-thiouridine biosynthesis bifunctional protein MnmC from Escherichia coli O9:H4 (strain HS).